The chain runs to 322 residues: Germ cell-specific gene 1-like protein (322 aa).

Residues 1–8 (MKTSRRGR) are Cytoplasmic-facing. Residues 9 to 29 (ALLAVALNLLALLFATTAFLT) traverse the membrane as a helical segment. The Extracellular segment spans residues 30 to 122 (TYWCQGTQRV…FIDLAPASEK (93 aa)). The helical transmembrane segment at 123–143 (GVLWLSVVSEVLYILLLVVGF) threads the bilayer. Residues 144 to 163 (SLMCLELVHSSSVIDGLKLN) are Cytoplasmic-facing. A helical transmembrane segment spans residues 164–184 (AFAAVFTVLSGLLGMVAHMMY). The Extracellular portion of the chain corresponds to 185 to 207 (TQVFQVTVSLGPEDWRPHSWDYG). The helical transmembrane segment at 208-228 (WSFCLAWGSFTCCMAASVTTL) threads the bilayer. At 229–322 (NSYTKTVIEF…RQCWVLGHWV (94 aa)) the chain is on the cytoplasmic side. Position 274 is a phosphoserine (serine 274).

This sequence belongs to the GSG1 family. As to quaternary structure, component of the inner core of AMPAR complexes. AMPAR complexes consist of an inner core made of 4 pore-forming GluA/GRIA proteins (GRIA1, GRIA2, GRIA3 and GRIA4) and 4 major auxiliary subunits arranged in a twofold symmetry. One of the two pairs of distinct binding sites is occupied either by CNIH2, CNIH3 or CACNG2, CACNG3. The other harbors CACNG2, CACNG3, CACNG4, CACNG8 or GSG1L. This inner core of AMPAR complexes is complemented by outer core constituents binding directly to the GluA/GRIA proteins at sites distinct from the interaction sites of the inner core constituents. Outer core constituents include at least PRRT1, PRRT2, CKAMP44/SHISA9, FRRS1L and NRN1. The proteins of the inner and outer core serve as a platform for other, more peripherally associated AMPAR constituents. Alone or in combination, these auxiliary subunits control the gating and pharmacology of the AMPAR complexes and profoundly impact their biogenesis and protein processing. In terms of tissue distribution, expressed in the brain, including hippocampus (at protein level).

It is found in the cell membrane. The protein resides in the synapse. Functionally, as a component of the inner core of AMPAR complexes, modifies AMPA receptor (AMPAR) gating. The chain is Germ cell-specific gene 1-like protein (Gsg1l) from Mus musculus (Mouse).